A 744-amino-acid chain; its full sequence is Catalase-peroxidase (744 aa).

Residues 108–231 (WHSAGTYRIS…LAAVQMGLIY (124 aa)) constitute a cross-link (tryptophyl-tyrosyl-methioninium (Trp-Tyr) (with M-257)). Residue H109 is the Proton acceptor of the active site. The tryptophyl-tyrosyl-methioninium (Tyr-Met) (with W-108) cross-link spans 231-257 (YVNPEGPNGNPDPIAAARDIRETFRRM). H272 serves as a coordination point for heme b. A disordered region spans residues 353–372 (ANQWKPKDGAGAGTVPDAHD).

It belongs to the peroxidase family. Peroxidase/catalase subfamily. Homodimer or homotetramer. Requires heme b as cofactor. In terms of processing, formation of the three residue Trp-Tyr-Met cross-link is important for the catalase, but not the peroxidase activity of the enzyme.

It carries out the reaction H2O2 + AH2 = A + 2 H2O. The enzyme catalyses 2 H2O2 = O2 + 2 H2O. Functionally, bifunctional enzyme with both catalase and broad-spectrum peroxidase activity. The chain is Catalase-peroxidase from Frankia casuarinae (strain DSM 45818 / CECT 9043 / HFP020203 / CcI3).